Reading from the N-terminus, the 145-residue chain is 3-dehydroquinate dehydratase (145 aa).

Tyr24 serves as the catalytic Proton acceptor. Residues Asn75, His81, and Asp88 each coordinate substrate. His101 serves as the catalytic Proton donor. Substrate is bound by residues 102 to 103 and Arg112; that span reads IS.

This sequence belongs to the type-II 3-dehydroquinase family. As to quaternary structure, homododecamer.

It catalyses the reaction 3-dehydroquinate = 3-dehydroshikimate + H2O. It participates in metabolic intermediate biosynthesis; chorismate biosynthesis; chorismate from D-erythrose 4-phosphate and phosphoenolpyruvate: step 3/7. Functionally, catalyzes a trans-dehydration via an enolate intermediate. This Rhizobium johnstonii (strain DSM 114642 / LMG 32736 / 3841) (Rhizobium leguminosarum bv. viciae) protein is 3-dehydroquinate dehydratase.